The sequence spans 588 residues: Interferon-activable protein 208 (588 aa).

A Pyrin domain is found at 5 to 92 (MVNYYKQIVL…VDILRKEMEK (88 aa)). Disordered stretches follow at residues 157-183 (ATSTSQAEGEPLTPQRFPTTASSSLQT) and 469-526 (EMQN…RRVN). Composition is skewed to polar residues over residues 172 to 183 (RFPTTASSSLQT) and 470 to 487 (MQNPQSGLGTGLSDQPRL).

This sequence belongs to the HIN-200 family.

In Mus musculus (Mouse), this protein is Interferon-activable protein 208.